Consider the following 78-residue polypeptide: Large ribosomal subunit protein uL29 (78 aa).

This sequence belongs to the universal ribosomal protein uL29 family.

This is Large ribosomal subunit protein uL29 from Rippkaea orientalis (strain PCC 8801 / RF-1) (Cyanothece sp. (strain PCC 8801)).